The sequence spans 224 residues: UPF0173 metal-dependent hydrolase EAT1b_0495 (224 aa).

Belongs to the UPF0173 family.

The polypeptide is UPF0173 metal-dependent hydrolase EAT1b_0495 (Exiguobacterium sp. (strain ATCC BAA-1283 / AT1b)).